A 407-amino-acid polypeptide reads, in one-letter code: Phosphopentomutase (407 aa).

Positions 10, 306, 311, 347, 348, and 359 each coordinate Mn(2+).

It belongs to the phosphopentomutase family. It depends on Mn(2+) as a cofactor.

Its subcellular location is the cytoplasm. It catalyses the reaction 2-deoxy-alpha-D-ribose 1-phosphate = 2-deoxy-D-ribose 5-phosphate. It carries out the reaction alpha-D-ribose 1-phosphate = D-ribose 5-phosphate. It functions in the pathway carbohydrate degradation; 2-deoxy-D-ribose 1-phosphate degradation; D-glyceraldehyde 3-phosphate and acetaldehyde from 2-deoxy-alpha-D-ribose 1-phosphate: step 1/2. In terms of biological role, isomerase that catalyzes the conversion of deoxy-ribose 1-phosphate (dRib-1-P) and ribose 1-phosphate (Rib-1-P) to deoxy-ribose 5-phosphate (dRib-5-P) and ribose 5-phosphate (Rib-5-P), respectively. The polypeptide is Phosphopentomutase (Cronobacter sakazakii (strain ATCC BAA-894) (Enterobacter sakazakii)).